Consider the following 317-residue polypeptide: Anamorsin homolog (317 aa).

The segment at 1 to 192 (MREVLVVSES…ITGVRPNWKA (192 aa)) is N-terminal SAM-like domain. Residues 193–216 (KGDRKSSSIHAAPIDGYISKAPDY) form a linker region. [2Fe-2S] cluster contacts are provided by Cys219, Cys226, Cys229, and Cys231. The interval 219–231 (CSTKPRACANCTC) is fe-S binding site A. Residues Cys286, Cys289, Cys297, and Cys300 each coordinate [4Fe-4S] cluster. 2 consecutive short sequence motifs (cx2C motif) follow at residues 286 to 289 (CGNC) and 297 to 300 (CDSC). The interval 286–300 (CGNCYLGDAFRCDSC) is fe-S binding site B.

Belongs to the anamorsin family. In terms of assembly, monomer. It depends on [2Fe-2S] cluster as a cofactor. [4Fe-4S] cluster is required as a cofactor.

The protein localises to the cytoplasm. It is found in the mitochondrion intermembrane space. Functionally, component of the cytosolic iron-sulfur (Fe-S) protein assembly (CIA) machinery. Required for the maturation of extramitochondrial Fe-S proteins. Part of an electron transfer chain functioning in an early step of cytosolic Fe-S biogenesis, facilitating the de novo assembly of a [4Fe-4S] cluster on the cytosolic Fe-S scaffold complex. Electrons are transferred from NADPH via a FAD- and FMN-containing diflavin oxidoreductase. Together with the diflavin oxidoreductase, also required for the assembly of the diferric tyrosyl radical cofactor of ribonucleotide reductase (RNR), probably by providing electrons for reduction during radical cofactor maturation in the catalytic small subunit. The polypeptide is Anamorsin homolog (Theileria parva (East coast fever infection agent)).